Reading from the N-terminus, the 3746-residue chain is N-(5-amino-5-carboxypentanoyl)-L-cysteinyl-D-valine synthase (3746 aa).

The adenylation (A) domain 1 stretch occupies residues 299–711; that stretch reads EEVVERHEDK…GRADFQIKLR (413 aa). The Carrier 1 domain maps to 818–895; the sequence is DLRGDTEIAL…RMADLLQNKQ (78 aa). Residue Ser855 is modified to O-(pantetheine 4'-phosphoryl)serine. The interval 918 to 1372 is condensation (C) domain 1; that stretch reads NIYLANSLQQ…YLSSIQLEQL (455 aa). Positions 1391–1801 are adenylation (A) domain 2; the sequence is FENEASQKPD…GRNDFQVKIR (411 aa). A Carrier 2 domain is found at 1902 to 1979; the sequence is PPRSEIERSL…AQTHLILNDA (78 aa). Ser1939 carries the post-translational modification O-(pantetheine 4'-phosphoryl)serine. The tract at residues 1994 to 2434 is condensation (C) domain 2; sequence QMIPVSRAQE…SELSAEGINE (441 aa). The segment at 2478–2883 is adenylation (A) domain 3; it reads AFLAAEKIAV…GRGDLQIKMR (406 aa). One can recognise a Carrier 3 domain in the interval 2991–3066; sequence PPRNIIEAKM…ALHDHVFMKD (76 aa). The residue at position 3026 (Ser3026) is an O-(pantetheine 4'-phosphoryl)serine. Residues 3084-3500 are epimerase (E) domain; it reads GEAPLLPIQD…NKILDGRASQ (417 aa). Residues 3530 to 3732 form a thioesterase (TE) domain region; it reads TLFLLPPGEG…FSWVGNPQQV (203 aa).

This sequence belongs to the NRP synthetase family. Pantetheine 4'-phosphate is required as a cofactor. It depends on Mg(2+) as a cofactor.

It localises to the cytoplasm. The protein resides in the cytosol. The protein localises to the vacuole membrane. The catalysed reaction is L-2-aminoadipate + L-valine + L-cysteine + 3 ATP + H2O = N-[(5S)-5-amino-5-carboxypentanoyl]-L-cysteinyl-D-valine + 3 AMP + 3 diphosphate + 3 H(+). It functions in the pathway antibiotic biosynthesis; penicillin G biosynthesis; penicillin G from L-alpha-aminoadipate and L-cysteine and L-valine: step 1/3. Functionally, nonribosomal peptide synthetase; part of the gene cluster that mediates the biosynthesis of penicillin, the world's most important antibiotic. The trimodular NRPS acvA produces the tripeptide N-[(5S)-5-amino-5-carboxypentanoyl]-L-cysteinyl-D-valine (LLD-ACV or ACV) via condensation of the 3 residues L-2-aminoadipate, L-cysteine and L-valine. The precursor amino acids for penicillin biosynthesis are withdrawn from the vacuolar amino acid pool by the MFS-type transporter penV. Each of the constituent amino acids of the tripeptide ACV are activated as aminoacyl-adenylates with peptide bonds formed through the participation of amino acid thioester intermediates. The penicillin biosynthesis occurs via 3 enzymatic steps, the first corresponding to the production of the tripeptide N-[(5S)-5-amino-5-carboxypentanoyl]-L-cysteinyl-D-valine (LLD-ACV or ACV) by the NRPS acvA. The tripeptide ACV is then cyclized to isopenicillin N (IPN) by the isopenicillin N synthase ipnA that forms the beta-lactam nucleus. Finally, the alpha-aminoadipyl side chain is exchanged for phenylacetic acid by the isopenicillin N acyltransferase aatA to yield penicillin in the peroxisomal matrix. This is N-(5-amino-5-carboxypentanoyl)-L-cysteinyl-D-valine synthase from Penicillium chrysogenum (Penicillium notatum).